The primary structure comprises 432 residues: Phosphomethylpyrimidine synthase (432 aa).

Substrate-binding positions include Asn66, Met95, Tyr124, His163, 185–187 (SRG), 226–229 (DGLR), and Glu265. Zn(2+) is bound at residue His269. Tyr292 serves as a coordination point for substrate. Position 333 (His333) interacts with Zn(2+). Residues Cys409, Cys412, and Cys416 each contribute to the [4Fe-4S] cluster site.

This sequence belongs to the ThiC family. The cofactor is [4Fe-4S] cluster.

It carries out the reaction 5-amino-1-(5-phospho-beta-D-ribosyl)imidazole + S-adenosyl-L-methionine = 4-amino-2-methyl-5-(phosphooxymethyl)pyrimidine + CO + 5'-deoxyadenosine + formate + L-methionine + 3 H(+). It participates in cofactor biosynthesis; thiamine diphosphate biosynthesis. Its function is as follows. Catalyzes the synthesis of the hydroxymethylpyrimidine phosphate (HMP-P) moiety of thiamine from aminoimidazole ribotide (AIR) in a radical S-adenosyl-L-methionine (SAM)-dependent reaction. The polypeptide is Phosphomethylpyrimidine synthase (Caldanaerobacter subterraneus subsp. tengcongensis (strain DSM 15242 / JCM 11007 / NBRC 100824 / MB4) (Thermoanaerobacter tengcongensis)).